Consider the following 265-residue polypeptide: Phosphonates import ATP-binding protein PhnC 1 (265 aa).

The ABC transporter domain maps to 3-247; it reads LRLSGIELRH…HLDTLYANEQ (245 aa). 36 to 43 contacts ATP; that stretch reads GPSGAGKT. Residues 245-265 form a disordered region; sequence NEQLSPQPAPDVSETPWTPRC.

Belongs to the ABC transporter superfamily. Phosphonates importer (TC 3.A.1.9.1) family. In terms of assembly, the complex is composed of two ATP-binding proteins (PhnC), two transmembrane proteins (PhnE) and a solute-binding protein (PhnD).

Its subcellular location is the cell inner membrane. The catalysed reaction is phosphonate(out) + ATP + H2O = phosphonate(in) + ADP + phosphate + H(+). In terms of biological role, part of the ABC transporter complex PhnCDE involved in phosphonates import. Responsible for energy coupling to the transport system. The protein is Phosphonates import ATP-binding protein PhnC 1 of Pseudomonas savastanoi pv. phaseolicola (strain 1448A / Race 6) (Pseudomonas syringae pv. phaseolicola (strain 1448A / Race 6)).